A 130-amino-acid chain; its full sequence is RxLR effector protein PITG_14783 (130 aa).

The first 20 residues, 1–20, serve as a signal peptide directing secretion; sequence MRLPYVFAATMATLLVSSNA. The segment at 27–58 is disordered; that stretch reads AMLSSPNEQHQRQLRSHQTPVEDQEPDEERSL. The short motif at 38–56 is the RxLR-dEER element; that stretch reads RQLRSHQTPVEDQEPDEER.

The protein belongs to the RxLR effector family.

It localises to the secreted. The protein resides in the host nucleus. It is found in the host cytoplasm. Effector that enhances P.infestans colonization of Nicotiana benthamiana leaves. In Phytophthora infestans (strain T30-4) (Potato late blight agent), this protein is RxLR effector protein PITG_14783.